A 419-amino-acid polypeptide reads, in one-letter code: UDP-N-acetylglucosamine 1-carboxyvinyltransferase (419 aa).

Residue 22 to 23 (KN) coordinates phosphoenolpyruvate. R93 contacts UDP-N-acetyl-alpha-D-glucosamine. C117 acts as the Proton donor in catalysis. C117 carries the 2-(S-cysteinyl)pyruvic acid O-phosphothioketal modification. UDP-N-acetyl-alpha-D-glucosamine contacts are provided by D306 and I328.

This sequence belongs to the EPSP synthase family. MurA subfamily.

It is found in the cytoplasm. It catalyses the reaction phosphoenolpyruvate + UDP-N-acetyl-alpha-D-glucosamine = UDP-N-acetyl-3-O-(1-carboxyvinyl)-alpha-D-glucosamine + phosphate. Its pathway is cell wall biogenesis; peptidoglycan biosynthesis. Functionally, cell wall formation. Adds enolpyruvyl to UDP-N-acetylglucosamine. This Ruthia magnifica subsp. Calyptogena magnifica protein is UDP-N-acetylglucosamine 1-carboxyvinyltransferase.